The following is a 170-amino-acid chain: Non-classical export protein 102 (170 aa).

Residues 1 to 11 are Cytoplasmic-facing; that stretch reads MLAIGDVILRA. Positions 6 to 141 constitute an MARVEL domain; the sequence is DVILRAFNFV…TFIFIASAIF (136 aa). A helical membrane pass occupies residues 12 to 32; that stretch reads FNFVFLVIALGLTGSLAATTI. At 33–38 the chain is on the extracellular side; that stretch reads TQHNPQ. A helical transmembrane segment spans residues 39 to 61; that stretch reads INFAVFAAAFGLLTSSFYGVFAY. At 62–76 the chain is on the cytoplasmic side; sequence FVAAFAWPVILFVFD. The helical transmembrane segment at 77–97 threads the bilayer; that stretch reads FLNFVFTFAAATAIAAGIRAH. Residues 98–125 are Extracellular-facing; that stretch reads SCSNQDYLDDNNIAQGSSGRCRKAQAST. Residues 126–146 form a helical membrane-spanning segment; it reads AFLYFSTFIFIASAIFSAISL. Residues 147-170 lie on the Cytoplasmic side of the membrane; that stretch reads SKGGLFGHSSRPAPRTGVPTMSQV.

Belongs to the NCE102 family.

Its subcellular location is the cell membrane. In terms of biological role, involved in membrane organization. Involved in a novel pathway of export of proteins that lack a cleavable signal sequence. Non-classical export pathway also functions as an alternative clearance/detoxification pathway to eliminate damaged material, when the basic repair pathway is not sufficient. Regulates actin organization and subsequent morphogenesis and pathogenesis. The polypeptide is Non-classical export protein 102 (Candida albicans (strain SC5314 / ATCC MYA-2876) (Yeast)).